Reading from the N-terminus, the 814-residue chain is Flagellar radial spoke protein 1 (814 aa).

Asymmetric dimethylarginine is present on Arg243. The interval 283 to 346 (VQSISTGNRE…PPPPAPKVDP (64 aa)) is disordered. Residues 303-329 (PEEDEEEEKEEEKEEPEEGEEGEEGEG) show a composition bias toward acidic residues. Asymmetric dimethylarginine is present on Arg428. MORN repeat units follow at residues 577-597 (YFGS…FATG), 600-622 (YAGE…DGGT), 623-645 (YVGE…DGSV), 646-662 (YTGS…GVYW), 671-685 (GEWK…GTYE), and 691-707 (FEGE…ATYT). Positions 739-769 (GIPPGSGDEPQLDEEGQPIEDTDKPPLPAHP) are disordered. Over residues 748-758 (PQLDEEGQPIE) the composition is skewed to acidic residues.

Post-translationally, asymmetrically dimethylated at Arg-243 and Arg-428 during flagellum resorption. Probably methylated by PRMT1.

It localises to the cytoplasm. Its subcellular location is the cytoskeleton. It is found in the flagellum axoneme. Functionally, flagellar radial spokes contribute to the regulation of dynein arm activity and thus the pattern of flagellar bending. They consist of a thin stalk, which is attached to the a subfiber of the outer doublet microtubule, and a bulbous head, which is attached to the stalk and appears to interact with the projections from the central pair of microtubules. This Chlamydomonas reinhardtii (Chlamydomonas smithii) protein is Flagellar radial spoke protein 1.